Reading from the N-terminus, the 109-residue chain is Anther-specific protein MZm3-3 (109 aa).

The signal sequence occupies residues 1-41 (MTATTTTAAGGGKVQPRGLPVALSLLLLLVLAAGLGGGAEA). Intrachain disulfides connect C45–C86, C55–C75, C76–C101, and C88–C108.

This sequence belongs to the A9/FIL1 family. As to expression, tapetum of anthers.

It localises to the secreted. This is Anther-specific protein MZm3-3 from Zea mays (Maize).